The chain runs to 311 residues: Catechol 1,2-dioxygenase (311 aa).

Y164 contributes to the catechol binding site. Residues Y164, Y200, H224, and H226 each coordinate Fe cation. Residue 224-226 (HIH) participates in catechol binding.

This sequence belongs to the intradiol ring-cleavage dioxygenase family. Homodimer. It depends on Fe(3+) as a cofactor.

The catalysed reaction is catechol + O2 = cis,cis-muconate + 2 H(+). The protein operates within aromatic compound metabolism; beta-ketoadipate pathway; 5-oxo-4,5-dihydro-2-furylacetate from catechol: step 1/3. This is Catechol 1,2-dioxygenase from Acinetobacter baylyi (strain ATCC 33305 / BD413 / ADP1).